The chain runs to 382 residues: Chaperone protein DnaJ (382 aa).

The J domain occupies 5-70 (DYYETLGVSR…NKRAAYDRYG (66 aa)). The CR-type zinc-finger motif lies at 140–218 (GKTAQIRVPT…CHGQGRITEE (79 aa)). The Zn(2+) site is built by Cys153, Cys156, Cys170, Cys173, Cys192, Cys195, Cys206, and Cys209. CXXCXGXG motif repeat units follow at residues 153 to 160 (CDVCSGSG), 170 to 177 (CGTCQGSG), 192 to 199 (CPTCHGRG), and 206 to 213 (CGKCHGQG).

Belongs to the DnaJ family. In terms of assembly, homodimer. It depends on Zn(2+) as a cofactor.

It is found in the cytoplasm. Functionally, participates actively in the response to hyperosmotic and heat shock by preventing the aggregation of stress-denatured proteins and by disaggregating proteins, also in an autonomous, DnaK-independent fashion. Unfolded proteins bind initially to DnaJ; upon interaction with the DnaJ-bound protein, DnaK hydrolyzes its bound ATP, resulting in the formation of a stable complex. GrpE releases ADP from DnaK; ATP binding to DnaK triggers the release of the substrate protein, thus completing the reaction cycle. Several rounds of ATP-dependent interactions between DnaJ, DnaK and GrpE are required for fully efficient folding. Also involved, together with DnaK and GrpE, in the DNA replication of plasmids through activation of initiation proteins. This chain is Chaperone protein DnaJ, found in Rhizobium rhizogenes (strain K84 / ATCC BAA-868) (Agrobacterium radiobacter).